Reading from the N-terminus, the 113-residue chain is MRHYEIIFMIHPDYSEKVSVIIEKYKKIIHHNSGIIHRLEDWGRRQLAYPINKLHKAHYILLNIETFPKTISLLETDFRFNNAVIRNIIISVKKAINEPSPVIKLKEEKKDKK.

The protein belongs to the bacterial ribosomal protein bS6 family.

Its function is as follows. Binds together with bS18 to 16S ribosomal RNA. The sequence is that of Small ribosomal subunit protein bS6 from Buchnera aphidicola subsp. Schizaphis graminum (strain Sg).